Here is an 83-residue protein sequence, read N- to C-terminus: Antitoxin ChpS (83 aa).

A SpoVT-AbrB domain is found at 3-48 (ITIKRWGNSAGMVIPNIVMKELNLQPGQSVEAQVSNNQLILTPISR).

Belongs to the PemI family. Interacts with ChpB, inhibiting its endoribonuclease activity.

In terms of biological role, antitoxin component of a type II toxin-antitoxin (TA) system. May be involved in the regulation of cell growth. It acts as a suppressor of the endoribonuclease (inhibitory function) of ChpB protein. Both ChpS and ChpB probably bind to the promoter region of the chpS-chpB operon to autoregulate their synthesis. The chain is Antitoxin ChpS (chpS) from Escherichia coli (strain K12).